A 548-amino-acid polypeptide reads, in one-letter code: Spindle pole body-associated protein cut12 (548 aa).

Residues 122–325 form an interaction with plo1 region; that stretch reads FKSPLLQSTP…GQQSKYKGKE (204 aa). The disordered stretch occupies residues 123–182; it reads KSPLLQSTPKPNINNPDNENKSKHDEFDNRYNININESYKNETKSNQRLGEDVPSKKKYP. Over residues 126–139 the composition is skewed to polar residues; the sequence is LLQSTPKPNINNPD. 2 stretches are compositionally biased toward basic and acidic residues: residues 140–151 and 161–182; these read NENKSKHDEFDN and YKNE…KKYP. Residues 261–312 are a coiled coil; it reads KQKFSMLDSAHSDLELELTSIRERLESLILEKQEEINFWKQRCRALETEKIH. Residues 344-356 show a composition bias toward polar residues; sequence PITTKVVSRPSQS. 2 disordered regions span residues 344-369 and 510-548; these read PITT…PSKN and SRVD…QLNS. Positions 522–548 form a coiled coil; that stretch reads RTANAKKRLEERRRRRKLKLQELQLNS.

In terms of assembly, self-associates. Interacts with plo1.

It is found in the cytoplasm. The protein resides in the cytoskeleton. The protein localises to the microtubule organizing center. Its subcellular location is the spindle pole body. Required for bipolar spindle formation. May act as a regulator of the p34cdc2/cyclin B kinase. Required for full activation of the plo1 kinase. However, in cut12.1 cells at restrictive temperature the H1 kinase does rise concomitant with entry into mitosis, indicating that cut12 is not required for activation of p34cdc2/cyclin B. The cut12.s11 allele may promote cdc2-independent phosphorylation of SPB proteins thereby overcoming the requirement for cdc25 in cell cycle progression. The polypeptide is Spindle pole body-associated protein cut12 (cut12) (Schizosaccharomyces pombe (strain 972 / ATCC 24843) (Fission yeast)).